The following is a 62-amino-acid chain: Photosystem II reaction center protein Z (62 aa).

Transmembrane regions (helical) follow at residues 8–28 (SVFA…VVLA) and 41–61 (FSGA…NSFI).

This sequence belongs to the PsbZ family. In terms of assembly, PSII is composed of 1 copy each of membrane proteins PsbA, PsbB, PsbC, PsbD, PsbE, PsbF, PsbH, PsbI, PsbJ, PsbK, PsbL, PsbM, PsbT, PsbY, PsbZ, Psb30/Ycf12, at least 3 peripheral proteins of the oxygen-evolving complex and a large number of cofactors. It forms dimeric complexes.

The protein resides in the plastid. It is found in the chloroplast thylakoid membrane. Its function is as follows. May control the interaction of photosystem II (PSII) cores with the light-harvesting antenna, regulates electron flow through the 2 photosystem reaction centers. PSII is a light-driven water plastoquinone oxidoreductase, using light energy to abstract electrons from H(2)O, generating a proton gradient subsequently used for ATP formation. The chain is Photosystem II reaction center protein Z from Chaetosphaeridium globosum (Charophycean green alga).